The chain runs to 142 residues: Large ribosomal subunit protein uL11 (142 aa).

This sequence belongs to the universal ribosomal protein uL11 family. Part of the ribosomal stalk of the 50S ribosomal subunit. Interacts with L10 and the large rRNA to form the base of the stalk. L10 forms an elongated spine to which L12 dimers bind in a sequential fashion forming a multimeric L10(L12)X complex. Post-translationally, one or more lysine residues are methylated.

In terms of biological role, forms part of the ribosomal stalk which helps the ribosome interact with GTP-bound translation factors. This Proteus vulgaris protein is Large ribosomal subunit protein uL11.